Here is a 173-residue protein sequence, read N- to C-terminus: ADP-ribosylation factor-like protein 11 (173 aa).

A lipid anchor (N-myristoyl glycine) is attached at glycine 2. Residues 17–24 (GLDCAGKT), 61–65 (DIGGQ), and 120–123 (NKQE) contribute to the GTP site.

Belongs to the small GTPase superfamily. Arf family.

In terms of biological role, may play a role in apoptosis. May act as a tumor suppressor. In Rattus norvegicus (Rat), this protein is ADP-ribosylation factor-like protein 11 (Arl11).